The chain runs to 98 residues: NADH-ubiquinone oxidoreductase chain 4L (98 aa).

3 consecutive transmembrane segments (helical) span residues 1-21 (MTLV…GLLM), 26-46 (LMSA…LATI), and 59-79 (MPII…ALLV).

It belongs to the complex I subunit 4L family. In terms of assembly, core subunit of respiratory chain NADH dehydrogenase (Complex I) which is composed of 45 different subunits.

The protein resides in the mitochondrion inner membrane. It catalyses the reaction a ubiquinone + NADH + 5 H(+)(in) = a ubiquinol + NAD(+) + 4 H(+)(out). Its function is as follows. Core subunit of the mitochondrial membrane respiratory chain NADH dehydrogenase (Complex I) which catalyzes electron transfer from NADH through the respiratory chain, using ubiquinone as an electron acceptor. Part of the enzyme membrane arm which is embedded in the lipid bilayer and involved in proton translocation. This Pontoporia blainvillei (Franciscana) protein is NADH-ubiquinone oxidoreductase chain 4L (MT-ND4L).